The following is an 836-amino-acid chain: MLRLMRQKKLSIQRRTKTTVSSTTTGGKSKEVQVEVRKKRTVKTDIAQQEEAKLKAQQEAEAKKIAEQKAIEEKARLEAEKVAAKKEADEKVKAETAKPVKSAVDSKVKSVDPEKEKRKAEEAELRRKAEELARQKAEEQARRAAEEAKRYAEADDSDNESSSEDYSDYNLSSRYALEAEDEEDRRNENRGRGKNKVAKAKKGGRDDENSKNSKNERESNRKNQKDAKFGKGKNGKKGAALQQAFTKPAQVVKSDVVIGETITVAELANKMAVKATEIIKMMMKMGEMVTINQVIDQETAQLVAEELGHKVILRNENELEEAVLGDRDVNAEKVTRAPVVTIMGHVDHGKTSLLDYIRKAKVAAGEAGGITQHIGAYHVEMDDGKMITFLDTPGHAAFTSMRARGAKATDIVVLVVAADDGVMPQTIEAIQHAKAAGAPLVVAVNKIDKPEANLDRVEQELLQHDVISEKFGGDVQFVPVSAKKGTGVDDLLDAILLQSEVLELTAVKDGMASGVVIESYLDKGRGPVATILVQSGTLRKGDIVLCGFEYGRVRAMRDENGKEVDEAGPSIPVELLGLSGVPAAGDEATVVRDEKKAREVALYRQGKFREVKLARQQKAKLENMFSNMSEGDVAELNVIVKADVQGSVEAIVQALNELSTNEVKVKVVGSGVGGITETDATLATASNAIIVGFNVRADATARRVIEAENIDLRYYSIIYELLNEIKAAMSGMLEPEFKQEIIGLAEVRDVFRHPKFGAIAGCMVTEGVVKRNNPIRVLRDNVVIFEGELESLRRFKDDVSEVRNGMECGIGVKNYNDVKVGDQIEVFEVVEVKRSI.

Residues 1 to 17 show a composition bias toward basic residues; it reads MLRLMRQKKLSIQRRTK. Disordered stretches follow at residues 1–43 and 83–240; these read MLRL…RTVK and AAKK…KGAA. Positions 18–27 are enriched in low complexity; it reads TTVSSTTTGG. The span at 83 to 153 shows a compositional bias: basic and acidic residues; the sequence is AAKKEADEKV…AAEEAKRYAE (71 aa). Positions 154-167 are enriched in acidic residues; the sequence is ADDSDNESSSEDYS. Over residues 192 to 202 the composition is skewed to basic residues; sequence RGKNKVAKAKK. Basic and acidic residues predominate over residues 203-229; that stretch reads GGRDDENSKNSKNERESNRKNQKDAKF. The 171-residue stretch at 335–505 folds into the tr-type G domain; the sequence is TRAPVVTIMG…LLQSEVLELT (171 aa). The segment at 344 to 351 is G1; sequence GHVDHGKT. 344 to 351 contributes to the GTP binding site; the sequence is GHVDHGKT. The segment at 369-373 is G2; sequence GITQH. The G3 stretch occupies residues 391–394; that stretch reads DTPG. GTP-binding positions include 391 to 395 and 445 to 448; these read DTPGH and NKID. Residues 445–448 are G4; that stretch reads NKID. The G5 stretch occupies residues 481–483; sequence SAK.

The protein belongs to the TRAFAC class translation factor GTPase superfamily. Classic translation factor GTPase family. IF-2 subfamily.

Its subcellular location is the cytoplasm. Its function is as follows. One of the essential components for the initiation of protein synthesis. Protects formylmethionyl-tRNA from spontaneous hydrolysis and promotes its binding to the 30S ribosomal subunits. Also involved in the hydrolysis of GTP during the formation of the 70S ribosomal complex. The sequence is that of Translation initiation factor IF-2 from Haemophilus influenzae (strain PittEE).